Reading from the N-terminus, the 556-residue chain is 2-succinyl-5-enolpyruvyl-6-hydroxy-3-cyclohexene-1-carboxylate synthase (556 aa).

This sequence belongs to the TPP enzyme family. MenD subfamily. As to quaternary structure, homodimer. It depends on Mg(2+) as a cofactor. Mn(2+) is required as a cofactor. Thiamine diphosphate serves as cofactor.

It carries out the reaction isochorismate + 2-oxoglutarate + H(+) = 5-enolpyruvoyl-6-hydroxy-2-succinyl-cyclohex-3-ene-1-carboxylate + CO2. It functions in the pathway quinol/quinone metabolism; 1,4-dihydroxy-2-naphthoate biosynthesis; 1,4-dihydroxy-2-naphthoate from chorismate: step 2/7. It participates in quinol/quinone metabolism; menaquinone biosynthesis. Functionally, catalyzes the thiamine diphosphate-dependent decarboxylation of 2-oxoglutarate and the subsequent addition of the resulting succinic semialdehyde-thiamine pyrophosphate anion to isochorismate to yield 2-succinyl-5-enolpyruvyl-6-hydroxy-3-cyclohexene-1-carboxylate (SEPHCHC). The sequence is that of 2-succinyl-5-enolpyruvyl-6-hydroxy-3-cyclohexene-1-carboxylate synthase from Salmonella agona (strain SL483).